The primary structure comprises 156 residues: MNIIEGAITAPHANVAIIVSRFNSFINDSLLSGALDALQRQGLVKESNITVVRCPGAYELPLLAQQLAKKGSYDAIIALGSVIRGGTPHFEYVAGECNKGLAQIALEHQIPVAFGVLTVDSIEQAIERAGTKMGNKGAEAALSALEMINVLAEIEP.

5-amino-6-(D-ribitylamino)uracil-binding positions include F22, A57–E59, and S81–I83. A (2S)-2-hydroxy-3-oxobutyl phosphate-binding site is contributed by G86–T87. Catalysis depends on H89, which acts as the Proton donor. Residue F114 participates in 5-amino-6-(D-ribitylamino)uracil binding. Residue R128 participates in (2S)-2-hydroxy-3-oxobutyl phosphate binding.

This sequence belongs to the DMRL synthase family. As to quaternary structure, forms an icosahedral capsid composed of 60 subunits, arranged as a dodecamer of pentamers.

It catalyses the reaction (2S)-2-hydroxy-3-oxobutyl phosphate + 5-amino-6-(D-ribitylamino)uracil = 6,7-dimethyl-8-(1-D-ribityl)lumazine + phosphate + 2 H2O + H(+). Its pathway is cofactor biosynthesis; riboflavin biosynthesis; riboflavin from 2-hydroxy-3-oxobutyl phosphate and 5-amino-6-(D-ribitylamino)uracil: step 1/2. In terms of biological role, catalyzes the formation of 6,7-dimethyl-8-ribityllumazine by condensation of 5-amino-6-(D-ribitylamino)uracil with 3,4-dihydroxy-2-butanone 4-phosphate. This is the penultimate step in the biosynthesis of riboflavin. The polypeptide is 6,7-dimethyl-8-ribityllumazine synthase (Photobacterium leiognathi).